The sequence spans 84 residues: uncharacterized protein (84 aa).

It to M.jannaschii MJ1121.

This is an uncharacterized protein from Archaeoglobus fulgidus (strain ATCC 49558 / DSM 4304 / JCM 9628 / NBRC 100126 / VC-16).